Here is a 163-residue protein sequence, read N- to C-terminus: Small heat shock protein C1 (163 aa).

A sHSP domain is found at 55–163; the sequence is MFYESSSIKS…EQDAKEITIN (109 aa).

Belongs to the small heat shock protein (HSP20) family.

The sequence is that of Small heat shock protein C1 (hspC1) from Rickettsia typhi (strain ATCC VR-144 / Wilmington).